The following is a 515-amino-acid chain: 2,3-bisphosphoglycerate-independent phosphoglycerate mutase (515 aa).

The Mn(2+) site is built by D14 and S64. Residue S64 is the Phosphoserine intermediate of the active site. Substrate contacts are provided by residues H125, 155–156 (RD), R187, R193, 263–266 (RADR), and K337. 5 residues coordinate Mn(2+): D404, H408, D445, H446, and H464.

It belongs to the BPG-independent phosphoglycerate mutase family. As to quaternary structure, monomer. It depends on Mn(2+) as a cofactor.

The catalysed reaction is (2R)-2-phosphoglycerate = (2R)-3-phosphoglycerate. Its pathway is carbohydrate degradation; glycolysis; pyruvate from D-glyceraldehyde 3-phosphate: step 3/5. Functionally, catalyzes the interconversion of 2-phosphoglycerate and 3-phosphoglycerate. The protein is 2,3-bisphosphoglycerate-independent phosphoglycerate mutase of Yersinia pestis bv. Antiqua (strain Antiqua).